A 1045-amino-acid chain; its full sequence is FERM, ARHGEF and pleckstrin domain-containing protein 1 (1045 aa).

Positions 1 to 37 (MGEIEQRPTPGSRLGAPENSGISTLERGQKPPPTPSG) are disordered. S20 and S23 each carry phosphoserine. Residue T24 is modified to Phosphothreonine. One can recognise an FERM domain in the interval 40 to 320 (VSIKIQMLDD…EHHAFFRLFE (281 aa)). S340, S373, S389, S403, S418, S427, and S433 each carry phosphoserine. Residues 392 to 534 (SASLTFGEGA…TDDEDEGRRK (143 aa)) form a disordered region. 2 stretches are compositionally biased toward polar residues: residues 471-489 (TGSL…NSQG) and 496-511 (VTLS…QASP). Residues S510 and S514 each carry the phosphoserine modification. A DH domain is found at 540-730 (KAYFIAKEVS…TEMVAQLHGT (191 aa)). The 98-residue stretch at 759–856 (EFIRLGSLSK…WVEDIQMAID (98 aa)) folds into the PH 1 domain. 3 positions are modified to phosphoserine: S833, S872, and S878. Residues 866-902 (PEFLASSPPDNKSPDEATAADQESEDDLSASRTSLER) form a disordered region. T883 carries the post-translational modification Phosphothreonine. 3 positions are modified to phosphoserine: S889, S896, and S899. Residues 932-1029 (ENQLSGNLLR…WMEVIRSATS (98 aa)) enclose the PH 2 domain.

As to quaternary structure, interacts with CADM1. Interacts with RAC1.

It localises to the cell membrane. It is found in the synapse. The protein resides in the synaptosome. The protein localises to the cytoplasm. Its subcellular location is the cytosol. It localises to the cell projection. It is found in the filopodium. The protein resides in the dendrite. The protein localises to the dendritic spine. Functions as a guanine nucleotide exchange factor for RAC1. May play a role in semaphorin signaling. Plays a role in the assembly and disassembly of dendritic filopodia, the formation of dendritic spines, regulation of dendrite length and ultimately the formation of synapses. The polypeptide is FERM, ARHGEF and pleckstrin domain-containing protein 1 (FARP1) (Pongo abelii (Sumatran orangutan)).